The sequence spans 303 residues: Suppressor of silencing P0 (303 aa).

It belongs to the polerovirus P0 protein family.

Its function is as follows. Suppressor of RNA-mediated gene silencing. This is Suppressor of silencing P0 from Pea enation mosaic virus-1 (strain WSG) (PEMV-1).